Reading from the N-terminus, the 283-residue chain is S-methyl-5'-thioadenosine phosphorylase (283 aa).

Residue threonine 18 coordinates phosphate. Residue lysine 51 is modified to N6-acetyllysine. Phosphate contacts are provided by residues 60–61 (RH) and 93–94 (TA). Methionine 196 contacts substrate. Threonine 197 contacts phosphate. 220 to 222 (DYD) lines the substrate pocket.

Belongs to the PNP/MTAP phosphorylase family. MTAP subfamily. As to quaternary structure, homotrimer.

It localises to the cytoplasm. It is found in the nucleus. The catalysed reaction is S-methyl-5'-thioadenosine + phosphate = 5-(methylsulfanyl)-alpha-D-ribose 1-phosphate + adenine. Its pathway is amino-acid biosynthesis; L-methionine biosynthesis via salvage pathway; S-methyl-5-thio-alpha-D-ribose 1-phosphate from S-methyl-5'-thioadenosine (phosphorylase route): step 1/1. Its function is as follows. Catalyzes the reversible phosphorylation of S-methyl-5'-thioadenosine (MTA) to adenine and 5-methylthioribose-1-phosphate. Involved in the breakdown of MTA, a major by-product of polyamine biosynthesis. Responsible for the first step in the methionine salvage pathway after MTA has been generated from S-adenosylmethionine. Has broad substrate specificity with 6-aminopurine nucleosides as preferred substrates. The protein is S-methyl-5'-thioadenosine phosphorylase of Bos taurus (Bovine).